Here is a 339-residue protein sequence, read N- to C-terminus: Protein pelota homolog (339 aa).

Belongs to the eukaryotic release factor 1 family. Pelota subfamily. In terms of assembly, monomer. It depends on a divalent metal cation as a cofactor.

It is found in the cytoplasm. Its function is as follows. May function in recognizing stalled ribosomes, interact with stem-loop structures in stalled mRNA molecules, and effect endonucleolytic cleavage of the mRNA. May play a role in the release non-functional ribosomes and degradation of damaged mRNAs. Has endoribonuclease activity. This chain is Protein pelota homolog (pelA), found in Thermoplasma acidophilum (strain ATCC 25905 / DSM 1728 / JCM 9062 / NBRC 15155 / AMRC-C165).